Here is a 154-residue protein sequence, read N- to C-terminus: Transcriptional repressor NrdR (154 aa).

A zinc finger spans residues 3 to 34 (CPFCGANDTKVIDSRLVAEGEQVRRRRECLAC). An ATP-cone domain is found at 49–139 (PRLIKQDGSR…VYRRFQDLNE (91 aa)).

The protein belongs to the NrdR family. Zn(2+) is required as a cofactor.

Its function is as follows. Negatively regulates transcription of bacterial ribonucleotide reductase nrd genes and operons by binding to NrdR-boxes. The sequence is that of Transcriptional repressor NrdR from Pseudomonas syringae pv. tomato (strain ATCC BAA-871 / DC3000).